An 84-amino-acid polypeptide reads, in one-letter code: Toxin Cll9 (84 aa).

The N-terminal stretch at 1–19 is a signal peptide; it reads MNSLLMITACLILIGTVWA. The LCN-type CS-alpha/beta domain occupies 20–83; sequence EDGYLFDKRK…ISRTPGKTCK (64 aa). Intrachain disulfides connect cysteine 31–cysteine 82, cysteine 35–cysteine 58, cysteine 44–cysteine 63, and cysteine 48–cysteine 65.

As to expression, expressed by the venom gland.

Its subcellular location is the secreted. Beta toxins bind voltage-independently at site-4 of sodium channels (Nav) and shift the voltage of activation toward more negative potentials thereby affecting sodium channel activation and promoting spontaneous and repetitive firing. Has some action on peripheral ganglia, but not on other sodium channels such as those from cerebellum granular cells in culture. Induces sleep, suggesting a strong antiepileptic action. The polypeptide is Toxin Cll9 (Centruroides limpidus (Mexican scorpion)).